The sequence spans 191 residues: Ferric nitrobindin-like protein (191 aa).

Residues 20–26 (GNWAGAG) carry the GXWXGXG motif.

The protein belongs to the nitrobindin family.

This is Ferric nitrobindin-like protein from Streptomyces avermitilis (strain ATCC 31267 / DSM 46492 / JCM 5070 / NBRC 14893 / NCIMB 12804 / NRRL 8165 / MA-4680).